Here is a 356-residue protein sequence, read N- to C-terminus: UDP-N-acetylglucosamine--N-acetylmuramyl-(pentapeptide) pyrophosphoryl-undecaprenol N-acetylglucosamine transferase (356 aa).

Positions 195 and 287 each coordinate UDP-N-acetyl-alpha-D-glucosamine.

Belongs to the glycosyltransferase 28 family. MurG subfamily.

It is found in the cell membrane. It catalyses the reaction Mur2Ac(oyl-L-Ala-gamma-D-Glu-L-Lys-D-Ala-D-Ala)-di-trans,octa-cis-undecaprenyl diphosphate + UDP-N-acetyl-alpha-D-glucosamine = beta-D-GlcNAc-(1-&gt;4)-Mur2Ac(oyl-L-Ala-gamma-D-Glu-L-Lys-D-Ala-D-Ala)-di-trans,octa-cis-undecaprenyl diphosphate + UDP + H(+). It functions in the pathway cell wall biogenesis; peptidoglycan biosynthesis. Its function is as follows. Cell wall formation. Catalyzes the transfer of a GlcNAc subunit on undecaprenyl-pyrophosphoryl-MurNAc-pentapeptide (lipid intermediate I) to form undecaprenyl-pyrophosphoryl-MurNAc-(pentapeptide)GlcNAc (lipid intermediate II). This is UDP-N-acetylglucosamine--N-acetylmuramyl-(pentapeptide) pyrophosphoryl-undecaprenol N-acetylglucosamine transferase from Streptococcus gordonii (strain Challis / ATCC 35105 / BCRC 15272 / CH1 / DL1 / V288).